Consider the following 285-residue polypeptide: Vacuolar protein sorting-associated protein 37B (285 aa).

The interaction with IST1 stretch occupies residues 50 to 170 (ASNRSLAEGN…EMVLKGQRLP (121 aa)). Residues 84-173 (FEAYQIKKTK…LKGQRLPQAL (90 aa)) form the VPS37 C-terminal domain. The disordered stretch occupies residues 175-201 (PLPPRLPELAPTAPLPYPAPEASGPPA). R218 carries the post-translational modification Omega-N-methylarginine. Positions 230–285 (GQAVPYPGLQCPPLPPRVGLPTQQGFSSQFVSPYPPPLPQRPPPRLPPHQPGFILQ) are disordered. Over residues 250–260 (PTQQGFSSQFV) the composition is skewed to polar residues. Positions 262-279 (PYPPPLPQRPPPRLPPHQ) are enriched in pro residues.

This sequence belongs to the VPS37 family. In terms of assembly, component of the ESCRT-I complex (endosomal sorting complex required for transport I) which consists of TSG101, VPS28, a VPS37 protein (VPS37A to -D) and MVB12A or MVB12B in a 1:1:1:1 stoichiometry. Interacts with TSG101, VPS28, MVB12A and MVB12B. Component of the ESCRT-I complex (endosomal sorting complex required for transport I) which consists of TSG101, VPS28, a VPS37 protein (VPS37A to -D) and UBAP1 in a 1:1:1:1 stoichiometry. Interacts with CEP55. Interacts with IST1. Widely expressed. Expressed in macrophages and lymphocytes.

It is found in the late endosome membrane. Component of the ESCRT-I complex, a regulator of vesicular trafficking process. Required for the sorting of endocytic ubiquitinated cargos into multivesicular bodies. May be involved in cell growth and differentiation. This is Vacuolar protein sorting-associated protein 37B (VPS37B) from Homo sapiens (Human).